The primary structure comprises 179 residues: Large ribosomal subunit protein uL5 (179 aa).

The protein belongs to the universal ribosomal protein uL5 family. In terms of assembly, part of the 50S ribosomal subunit; part of the 5S rRNA/L5/L18/L25 subcomplex. Contacts the 5S rRNA and the P site tRNA. Forms a bridge to the 30S subunit in the 70S ribosome.

Functionally, this is one of the proteins that bind and probably mediate the attachment of the 5S RNA into the large ribosomal subunit, where it forms part of the central protuberance. In the 70S ribosome it contacts protein S13 of the 30S subunit (bridge B1b), connecting the 2 subunits; this bridge is implicated in subunit movement. Contacts the P site tRNA; the 5S rRNA and some of its associated proteins might help stabilize positioning of ribosome-bound tRNAs. The sequence is that of Large ribosomal subunit protein uL5 from Pseudomonas paraeruginosa (strain DSM 24068 / PA7) (Pseudomonas aeruginosa (strain PA7)).